The primary structure comprises 72 residues: MGAKKNLLAELREKSSEELDEFIRDNKKALFALRAEAALQNKVVKTHQFSLYKKSIARALIIKQEKKDRVHG.

This sequence belongs to the universal ribosomal protein uL29 family.

This Chlamydia trachomatis serovar L2 (strain ATCC VR-902B / DSM 19102 / 434/Bu) protein is Large ribosomal subunit protein uL29.